Here is a 119-residue protein sequence, read N- to C-terminus: Beta-2-microglobulin (119 aa).

Residues 1 to 20 form the signal peptide; sequence MARFVVVPLFVLLSLFGLEA. The Ig-like C1-type domain occupies 25 to 114; that stretch reads PKIQVYSRYP…VTFSTPKTVK (90 aa). Cysteines 45 and 100 form a disulfide.

This sequence belongs to the beta-2-microglobulin family. As to quaternary structure, heterodimer of an alpha chain and a beta chain. Beta-2-microglobulin is the beta-chain of major histocompatibility complex class I molecules.

The protein localises to the secreted. In terms of biological role, component of the class I major histocompatibility complex (MHC). Involved in the presentation of peptide antigens to the immune system. The protein is Beta-2-microglobulin (B2M) of Saguinus niger (Black tamarin).